A 765-amino-acid polypeptide reads, in one-letter code: Protein transport protein Sec23A (765 aa).

Position 2 is an N-acetylthreonine (T2). Positions 61, 66, 85, and 88 each coordinate Zn(2+). T308 carries the post-translational modification Phosphothreonine. The Gelsolin-like repeat unit spans residues 632 to 718; the sequence is PEPVLLDSSS…EHGGSQARFL (87 aa).

Belongs to the SEC23/SEC24 family. SEC23 subfamily. As to quaternary structure, COPII is composed of at least five proteins: the Sec23/24 complex, the Sec13/31 complex and Sar1. Interacts with SEC23IP. Interacts with HTR4. Interacts with SEC16A. Interacts with SLC6A4. Interacts (as part of the Sec23/24 complex) with SEC22B; recruits SEC22B into COPII-coated vesicles and allows the transport of this cargo from the endoplasmic reticulum to the Golgi. Interacts (via Gelsolin-like repeat) with MIA2 and MIA3; specifically involved in the transport of large cargos like the collagen COL7A1. Interacts with DDHD1. Interacts with TMEM39A. Interacts with SACM1L; this interaction is reduced in the absence of TMEM39A. Interacts with kinase FAM20C; transport of FAM20C from the endoplasmic reticulum to the Golgi is likely to be mediated by COPII vesicles. As to expression, high levels in brain and fibroblasts.

It localises to the cytoplasmic vesicle. Its subcellular location is the COPII-coated vesicle membrane. The protein localises to the endoplasmic reticulum membrane. It is found in the cytoplasm. The protein resides in the cytosol. Component of the coat protein complex II (COPII) which promotes the formation of transport vesicles from the endoplasmic reticulum (ER). The coat has two main functions, the physical deformation of the endoplasmic reticulum membrane into vesicles and the selection of cargo molecules for their transport to the Golgi complex. Required for the translocation of insulin-induced glucose transporter SLC2A4/GLUT4 to the cell membrane. The sequence is that of Protein transport protein Sec23A from Mus musculus (Mouse).